A 398-amino-acid polypeptide reads, in one-letter code: Acetate kinase (398 aa).

Asn7 lines the Mg(2+) pocket. ATP is bound at residue Lys14. Arg91 contacts substrate. The Proton donor/acceptor role is filled by Asp148. Residues 208–212 (HIGNG), 283–285 (DMR), and 331–335 (GVGEN) contribute to the ATP site. Glu384 contributes to the Mg(2+) binding site.

Belongs to the acetokinase family. As to quaternary structure, homodimer. Requires Mg(2+) as cofactor. Mn(2+) serves as cofactor.

The protein resides in the cytoplasm. It carries out the reaction acetate + ATP = acetyl phosphate + ADP. Its pathway is metabolic intermediate biosynthesis; acetyl-CoA biosynthesis; acetyl-CoA from acetate: step 1/2. In terms of biological role, catalyzes the formation of acetyl phosphate from acetate and ATP. Can also catalyze the reverse reaction. This Phocaeicola vulgatus (strain ATCC 8482 / DSM 1447 / JCM 5826 / CCUG 4940 / NBRC 14291 / NCTC 11154) (Bacteroides vulgatus) protein is Acetate kinase.